Reading from the N-terminus, the 130-residue chain is Albumin-1 C (130 aa).

The N-terminal stretch at 1-26 (MASVKLASLIVLFATLGMFLTKNVGA) is a signal peptide. 3 disulfides stabilise this stretch: Cys29/Cys46, Cys33/Cys48, and Cys41/Cys58. Propeptides lie at residues 64–69 (VFLRTN) and 123–130 (LLKSVSTA).

In terms of processing, the C-terminal glycine may be removed from PA1b. In terms of tissue distribution, major component of both the cotyledons and embryonic axes of mature seeds.

In terms of biological role, PA1b binds to basic 7S globulin (BG) and stimulates its phosphorylation activity. Involved in the signal transduction system to regulate the growth and differentiation as a hormone peptide. Toxic to various insects through binding to a high affinity binding site in the insect gut. This is Albumin-1 C from Pisum sativum (Garden pea).